Consider the following 370-residue polypeptide: Cyclin-A3-4 (370 aa).

This sequence belongs to the cyclin family. Cyclin AB subfamily. Interacts with FZR2/CCS52A1, FZR1/CCS52A2 and FZR3/CCS52B.

This is Cyclin-A3-4 (CYCA3-4) from Arabidopsis thaliana (Mouse-ear cress).